The chain runs to 314 residues: Lipoyl synthase (314 aa).

Positions 60, 65, 71, 86, 90, 93, and 300 each coordinate [4Fe-4S] cluster. Positions 72–289 (FRKGTATFMI…RQFGLSIGFS (218 aa)) constitute a Radical SAM core domain.

The protein belongs to the radical SAM superfamily. Lipoyl synthase family. The cofactor is [4Fe-4S] cluster.

The protein localises to the cytoplasm. It catalyses the reaction [[Fe-S] cluster scaffold protein carrying a second [4Fe-4S](2+) cluster] + N(6)-octanoyl-L-lysyl-[protein] + 2 oxidized [2Fe-2S]-[ferredoxin] + 2 S-adenosyl-L-methionine + 4 H(+) = [[Fe-S] cluster scaffold protein] + N(6)-[(R)-dihydrolipoyl]-L-lysyl-[protein] + 4 Fe(3+) + 2 hydrogen sulfide + 2 5'-deoxyadenosine + 2 L-methionine + 2 reduced [2Fe-2S]-[ferredoxin]. Its pathway is protein modification; protein lipoylation via endogenous pathway; protein N(6)-(lipoyl)lysine from octanoyl-[acyl-carrier-protein]: step 2/2. Functionally, catalyzes the radical-mediated insertion of two sulfur atoms into the C-6 and C-8 positions of the octanoyl moiety bound to the lipoyl domains of lipoate-dependent enzymes, thereby converting the octanoylated domains into lipoylated derivatives. In Pelobacter propionicus (strain DSM 2379 / NBRC 103807 / OttBd1), this protein is Lipoyl synthase.